We begin with the raw amino-acid sequence, 604 residues long: ERAD-associated E3 ubiquitin-protein ligase component HRD3B (604 aa).

Positions 1 to 25 are cleaved as a signal peptide; it reads MRVSGQSIIAISLFTLSLYIHRVQA. The disordered stretch occupies residues 48 to 69; it reads ESSDFDEFGESEPKSEEELDPG. Asparagine 78 and asparagine 105 each carry an N-linked (GlcNAc...) asparagine glycan. Sel1-like repeat units follow at residues 125–160, 244–274, 279–307, 311–344, 346–380, 464–492, and 498–528; these read PHAQSVMGFVYGIGMMRETSRSKSILHHHFAAAGGN, VAMHKIGLFYYFGLRGLRRDHAKALYWFSKA, LGYLYVKGYGVDKRNYTKAREYFEMAANN, SGHYNLGVLYLKGTGVKKDVRHATKYFFVAANAG, PKAFYQLAKMFHTGVGLTKNLEMATTFYKLVAERG, AALLIGDAYYYGRGTERDFVRAAEAYMYA, and AQAMFNLGYMHEHGEGLPFDLHLAKRYYDQA. The N-linked (GlcNAc...) asparagine glycan is linked to asparagine 293.

It belongs to the sel-1 family.

Functionally, may be involved in the endoplasmic reticulum (ER) quality control system called ER-associated degradation (ERAD). In Arabidopsis thaliana (Mouse-ear cress), this protein is ERAD-associated E3 ubiquitin-protein ligase component HRD3B.